The primary structure comprises 450 residues: Cysteine protease ATG4C (450 aa).

C112 functions as the Nucleophile in the catalytic mechanism. Catalysis depends on residues D336 and H338.

The protein belongs to the peptidase C54 family.

Its subcellular location is the cytoplasm. The catalysed reaction is [protein]-C-terminal L-amino acid-glycyl-phosphatidylethanolamide + H2O = [protein]-C-terminal L-amino acid-glycine + a 1,2-diacyl-sn-glycero-3-phosphoethanolamine. Functionally, cysteine protease that plays a key role in autophagy by mediating both proteolytic activation and delipidation of ATG8 family proteins. The protease activity is required for proteolytic activation of ATG8 family proteins: cleaves the C-terminal amino acid of ATG8 proteins to reveal a C-terminal glycine. Exposure of the glycine at the C-terminus is essential for ATG8 proteins conjugation to phosphatidylethanolamine (PE) and insertion to membranes, which is necessary for autophagy. In addition to the protease activity, also mediates delipidation of ATG8 family proteins. Catalyzes delipidation of PE-conjugated forms of ATG8 proteins during macroautophagy. The sequence is that of Cysteine protease ATG4C from Xenopus laevis (African clawed frog).